A 282-amino-acid chain; its full sequence is 4-diphosphocytidyl-2-C-methyl-D-erythritol kinase (282 aa).

Lys-11 is a catalytic residue. Residue 93 to 103 (LVSAGLAGGSA) participates in ATP binding. Asp-133 is a catalytic residue.

The protein belongs to the GHMP kinase family. IspE subfamily.

It catalyses the reaction 4-CDP-2-C-methyl-D-erythritol + ATP = 4-CDP-2-C-methyl-D-erythritol 2-phosphate + ADP + H(+). It functions in the pathway isoprenoid biosynthesis; isopentenyl diphosphate biosynthesis via DXP pathway; isopentenyl diphosphate from 1-deoxy-D-xylulose 5-phosphate: step 3/6. In terms of biological role, catalyzes the phosphorylation of the position 2 hydroxy group of 4-diphosphocytidyl-2C-methyl-D-erythritol. The polypeptide is 4-diphosphocytidyl-2-C-methyl-D-erythritol kinase (Ehrlichia chaffeensis (strain ATCC CRL-10679 / Arkansas)).